A 106-amino-acid chain; its full sequence is Nucleoid-associated protein Smlt1015 (106 aa).

The interval 81–106 (IDAESKSKMGSATAGMQLPPGMKLPF) is disordered.

It belongs to the YbaB/EbfC family. Homodimer.

Its subcellular location is the cytoplasm. The protein resides in the nucleoid. Binds to DNA and alters its conformation. May be involved in regulation of gene expression, nucleoid organization and DNA protection. This Stenotrophomonas maltophilia (strain K279a) protein is Nucleoid-associated protein Smlt1015.